The following is a 134-amino-acid chain: Complexin-2 (134 aa).

Residues 1–114 (MDFVMKQALG…CGDEEEEEEE (114 aa)) form a disordered region. The segment covering 15–85 (DMGKMLGGEE…EEKEAEEKAA (71 aa)) has biased composition (basic and acidic residues). Residues 28-84 (PDAQKKEEERQEALRQQEEERKAKHARMEAEREKVRQQIRDKYGLKKKEEKEAEEKA) are a coiled coil. The interval 41–97 (LRQQEEERKAKHARMEAEREKVRQQIRDKYGLKKKEEKEAEEKAALEQPCEGSLTRP) is interaction with the SNARE complex. At Ser-93 the chain carries Phosphoserine.

This sequence belongs to the complexin/synaphin family. As to quaternary structure, binds to the SNARE core complex containing SNAP25, VAMP2 and STX1A. As to expression, nervous system. Also present in adrenal chromaffin cells (at protein level).

Its subcellular location is the cytoplasm. It is found in the cytosol. The protein resides in the presynapse. It localises to the nucleus. The protein localises to the perikaryon. Functionally, negatively regulates the formation of synaptic vesicle clustering at active zone to the presynaptic membrane in postmitotic neurons. Positively regulates a late step in exocytosis of various cytoplasmic vesicles, such as synaptic vesicles and other secretory vesicles. Also involved in mast cell exocytosis. The protein is Complexin-2 (CPLX2) of Bos taurus (Bovine).